Consider the following 132-residue polypeptide: D-ribose pyranase (132 aa).

The active-site Proton donor is His-20. Residues Asp-28, His-99, and 121 to 123 (YSN) contribute to the substrate site.

Belongs to the RbsD / FucU family. RbsD subfamily. As to quaternary structure, homodecamer.

The protein resides in the cytoplasm. The enzyme catalyses beta-D-ribopyranose = beta-D-ribofuranose. The protein operates within carbohydrate metabolism; D-ribose degradation; D-ribose 5-phosphate from beta-D-ribopyranose: step 1/2. In terms of biological role, catalyzes the interconversion of beta-pyran and beta-furan forms of D-ribose. The sequence is that of D-ribose pyranase from Pseudomonas putida (strain ATCC 47054 / DSM 6125 / CFBP 8728 / NCIMB 11950 / KT2440).